The following is a 188-amino-acid chain: Elongation factor P (188 aa).

Lys-34 is subject to N6-(3,6-diaminohexanoyl)-5-hydroxylysine.

Belongs to the elongation factor P family. May be beta-lysylated on the epsilon-amino group of Lys-34 by the combined action of EpmA and EpmB, and then hydroxylated on the C5 position of the same residue by EpmC (if this protein is present). Lysylation is critical for the stimulatory effect of EF-P on peptide-bond formation. The lysylation moiety may extend toward the peptidyltransferase center and stabilize the terminal 3-CCA end of the tRNA. Hydroxylation of the C5 position on Lys-34 may allow additional potential stabilizing hydrogen-bond interactions with the P-tRNA.

The protein localises to the cytoplasm. It functions in the pathway protein biosynthesis; polypeptide chain elongation. In terms of biological role, involved in peptide bond synthesis. Alleviates ribosome stalling that occurs when 3 or more consecutive Pro residues or the sequence PPG is present in a protein, possibly by augmenting the peptidyl transferase activity of the ribosome. Modification of Lys-34 is required for alleviation. This chain is Elongation factor P, found in Pectobacterium carotovorum subsp. carotovorum (strain PC1).